The following is a 282-amino-acid chain: NADPH-dependent 7-cyano-7-deazaguanine reductase (282 aa).

I88 to S90 provides a ligand contact to substrate. S90–K91 provides a ligand contact to NADPH. Residue C190 is the Thioimide intermediate of the active site. The active-site Proton donor is the D197. Substrate is bound at residue H229–E230. Position 258–259 (R258–G259) interacts with NADPH.

It belongs to the GTP cyclohydrolase I family. QueF type 2 subfamily. As to quaternary structure, homodimer.

The protein localises to the cytoplasm. The catalysed reaction is 7-aminomethyl-7-carbaguanine + 2 NADP(+) = 7-cyano-7-deazaguanine + 2 NADPH + 3 H(+). It functions in the pathway tRNA modification; tRNA-queuosine biosynthesis. Its function is as follows. Catalyzes the NADPH-dependent reduction of 7-cyano-7-deazaguanine (preQ0) to 7-aminomethyl-7-deazaguanine (preQ1). The chain is NADPH-dependent 7-cyano-7-deazaguanine reductase from Salmonella paratyphi A (strain ATCC 9150 / SARB42).